A 129-amino-acid chain; its full sequence is Small ribosomal subunit protein uS11 (129 aa).

Belongs to the universal ribosomal protein uS11 family. As to quaternary structure, part of the 30S ribosomal subunit. Interacts with proteins S7 and S18. Binds to IF-3.

Located on the platform of the 30S subunit, it bridges several disparate RNA helices of the 16S rRNA. Forms part of the Shine-Dalgarno cleft in the 70S ribosome. In Lactobacillus delbrueckii subsp. bulgaricus (strain ATCC 11842 / DSM 20081 / BCRC 10696 / JCM 1002 / NBRC 13953 / NCIMB 11778 / NCTC 12712 / WDCM 00102 / Lb 14), this protein is Small ribosomal subunit protein uS11.